A 294-amino-acid polypeptide reads, in one-letter code: 4-hydroxy-tetrahydrodipicolinate synthase (294 aa).

Threonine 47 is a binding site for pyruvate. Tyrosine 136 functions as the Proton donor/acceptor in the catalytic mechanism. Residue lysine 164 is the Schiff-base intermediate with substrate of the active site. Residue valine 206 participates in pyruvate binding.

This sequence belongs to the DapA family. In terms of assembly, homotetramer; dimer of dimers.

It localises to the cytoplasm. The catalysed reaction is L-aspartate 4-semialdehyde + pyruvate = (2S,4S)-4-hydroxy-2,3,4,5-tetrahydrodipicolinate + H2O + H(+). The protein operates within amino-acid biosynthesis; L-lysine biosynthesis via DAP pathway; (S)-tetrahydrodipicolinate from L-aspartate: step 3/4. Its function is as follows. Catalyzes the condensation of (S)-aspartate-beta-semialdehyde [(S)-ASA] and pyruvate to 4-hydroxy-tetrahydrodipicolinate (HTPA). This chain is 4-hydroxy-tetrahydrodipicolinate synthase, found in Cyanothece sp. (strain PCC 7425 / ATCC 29141).